The chain runs to 364 residues: DNA polymerase IV (364 aa).

The UmuC domain maps to 14–198; sequence IIHIDMDAFF…LPIEKFHGVG (185 aa). Mg(2+) is bound by residues Asp18 and Asp116. Residue Glu117 is part of the active site.

The protein belongs to the DNA polymerase type-Y family. In terms of assembly, monomer. Mg(2+) is required as a cofactor.

It is found in the cytoplasm. The catalysed reaction is DNA(n) + a 2'-deoxyribonucleoside 5'-triphosphate = DNA(n+1) + diphosphate. Poorly processive, error-prone DNA polymerase involved in untargeted mutagenesis. Copies undamaged DNA at stalled replication forks, which arise in vivo from mismatched or misaligned primer ends. These misaligned primers can be extended by PolIV. Exhibits no 3'-5' exonuclease (proofreading) activity. May be involved in translesional synthesis, in conjunction with the beta clamp from PolIII. The chain is DNA polymerase IV from Streptococcus pyogenes serotype M6 (strain ATCC BAA-946 / MGAS10394).